Consider the following 955-residue polypeptide: HAUS augmin-like complex subunit 6 (955 aa).

Residues 188–219 are a coiled coil; sequence QKYQENAQLSVKQVRNLRSECIGLENQIKKME. The residue at position 406 (S406) is a Phosphoserine. The interval 474 to 495 is disordered; it reads NSVTVLEKDTKMGTPKEKNEAI. The span at 479 to 495 shows a compositional bias: basic and acidic residues; that stretch reads LEKDTKMGTPKEKNEAI. 5 positions are modified to phosphoserine: S507, S524, S530, S550, and S552. A Phosphothreonine modification is found at T584. S715, S728, S742, and S805 each carry phosphoserine. The interval 789–814 is disordered; that stretch reads FNSSSSSEANFKLEPNSPMHGGTLLE. T823 bears the Phosphothreonine mark. A disordered region spans residues 848–876; it reads REESYLSNSQTPERHKPELSPTPQNVQTD. A phosphoserine mark is found at S908, S914, and S943.

This sequence belongs to the HAUS6 family. In terms of assembly, component of the HAUS augmin-like complex. The complex interacts with the gamma-tubulin ring complex and this interaction is required for spindle assembly. Interacts with PLK1, NEDD1 and gamma-tubulin. Interacts with EML3 (phosphorylated at 'Thr-881'). Post-translationally, phosphorylated during mitosis.

The protein localises to the cytoplasm. It localises to the cytoskeleton. It is found in the spindle. Its subcellular location is the microtubule organizing center. The protein resides in the centrosome. Functionally, contributes to mitotic spindle assembly, maintenance of centrosome integrity and completion of cytokinesis as part of the HAUS augmin-like complex. Promotes the nucleation of microtubules from the spindle through recruitment of NEDD1 and gamma-tubulin. In Homo sapiens (Human), this protein is HAUS augmin-like complex subunit 6 (HAUS6).